The sequence spans 421 residues: Histidine--tRNA ligase (421 aa).

It belongs to the class-II aminoacyl-tRNA synthetase family.

The protein localises to the cytoplasm. It carries out the reaction tRNA(His) + L-histidine + ATP = L-histidyl-tRNA(His) + AMP + diphosphate + H(+). The sequence is that of Histidine--tRNA ligase from Pyrobaculum calidifontis (strain DSM 21063 / JCM 11548 / VA1).